Here is a 340-residue protein sequence, read N- to C-terminus: MSSTGKIKIGINGFGRIGRLVARVALLRDDIELVAVNDPFISTDYMTYMFKYDSVHGQWKKHEVKVKDSNTLLFGEKAVTVFGCRNPEEIPWGETGVEYVVESTGVFTDKEKAAAHIKGGAKKVVITAPSKDAPMFVVGVNEHEYKPDLAIVSNASCTTNCLAPLAKVINDRFGIVEGLMTTVHSITATQKTVDGPSNKDWRGGRGAGFNIIPSSTGAAKAVGKVLPALNGKLTGMAFRVPTPDVSVVDLTVRLEKPASYDEIKAAIKEESEGKLKGILGYTEDDVVSTDFIGDNRSSIFDAKAGIALSDNFVKLVSWYDNEWGYSSRVIDLIVHMASTV.

NAD(+) contacts are provided by residues 16 to 17 (RI), D38, and R85. D-glyceraldehyde 3-phosphate is bound by residues 156-158 (SCT), T187, 216-217 (TG), and R239. C157 (nucleophile) is an active-site residue. An NAD(+)-binding site is contributed by N321.

This sequence belongs to the glyceraldehyde-3-phosphate dehydrogenase family. In terms of assembly, homotetramer.

The protein localises to the cytoplasm. It catalyses the reaction D-glyceraldehyde 3-phosphate + phosphate + NAD(+) = (2R)-3-phospho-glyceroyl phosphate + NADH + H(+). It participates in carbohydrate degradation; glycolysis; pyruvate from D-glyceraldehyde 3-phosphate: step 1/5. Its function is as follows. Key enzyme in glycolysis that catalyzes the first step of the pathway by converting D-glyceraldehyde 3-phosphate (G3P) into 3-phospho-D-glyceroyl phosphate. Essential for the maintenance of cellular ATP levels and carbohydrate metabolism. This Ginkgo biloba (Ginkgo) protein is Glyceraldehyde-3-phosphate dehydrogenase, cytosolic.